Reading from the N-terminus, the 245-residue chain is Isopentenyl phosphate kinase (245 aa).

Position 5-9 (5-9) interacts with ATP; sequence KIGGS. Position 45 (Gly45) interacts with substrate. Gly46 provides a ligand contact to ATP. The substrate site is built by His50 and Gly143. Residues Asp164, 169-174, Gly201, and Lys205 each bind ATP; that span reads YSKDPK.

It belongs to the isopentenyl phosphate kinase family. In terms of assembly, homodimer.

The enzyme catalyses isopentenyl phosphate + ATP = isopentenyl diphosphate + ADP. Functionally, catalyzes the formation of isopentenyl diphosphate (IPP), the building block of all isoprenoids. Has lower activity with isopentenyl thiolophosphate (ISP). Has low activity with dimethylallyl phosphate (DMAP), 1-butyl phosphate (BP) and 3-buten-1-yl phosphate (BEP). Has no significant activity with geranyl phosphate (in vitro). The sequence is that of Isopentenyl phosphate kinase from Thermoplasma acidophilum (strain ATCC 25905 / DSM 1728 / JCM 9062 / NBRC 15155 / AMRC-C165).